The chain runs to 293 residues: MSSTYKATGINLKAMPLGESDRLLTILTREYGLIRVVAPGARKPRSSLGGRSGLFVVNELLIAPGRSLHKLSQAETLTSYARLSKHLSTLTASQYLAELVIYQALSEQPQVELFDLLCYYLSWLEQSPEQEVLAVLSRAVFHLLEWAGIAPQVQQCCLTRRPITPDYTDPDWRIGFSCRAGGTVTSLAEALSLPASELQSTPAVPSRSAPALEHPHVYLTAIELEVLQHLSTSLPSSPTVSWSDLPPPSHYPTWVWLAIERTLRQYIQSYLDRPIRSAVLMDACFSPLSPAFS.

It belongs to the RecO family.

Functionally, involved in DNA repair and RecF pathway recombination. The sequence is that of DNA repair protein RecO from Cyanothece sp. (strain PCC 7425 / ATCC 29141).